The chain runs to 125 residues: Small ribosomal subunit protein uS12m (125 aa).

It belongs to the universal ribosomal protein uS12 family. Component of the mitochondrial ribosome small subunit.

The protein resides in the mitochondrion. In terms of biological role, protein S12 is involved in the translation initiation step. The polypeptide is Small ribosomal subunit protein uS12m (RPS12) (Arabidopsis thaliana (Mouse-ear cress)).